The primary structure comprises 297 residues: Iron/alpha-ketoglutarate-dependent dioxygenase ausU (297 aa).

Residues H130, D132, and H206 each coordinate Fe cation.

The protein belongs to the PhyH family. In terms of assembly, homodimer. Fe cation serves as cofactor.

It participates in secondary metabolite biosynthesis; terpenoid biosynthesis. In terms of biological role, iron/alpha-ketoglutarate-dependent dioxygenase; part of the gene cluster that mediates the biosynthesis of calidodehydroaustin, a fungal meroterpenoid. The first step of the pathway is the synthesis of 3,5-dimethylorsellinic acid by the polyketide synthase ausA. 3,5-dimethylorsellinic acid is then prenylated by the polyprenyl transferase ausN. Further epoxidation by the FAD-dependent monooxygenase ausM and cyclization by the probable terpene cyclase ausL lead to the formation of protoaustinoid A. Protoaustinoid A is then oxidized to spiro-lactone preaustinoid A3 by the combined action of the FAD-binding monooxygenases ausB and ausC, and the dioxygenase ausE. Acid-catalyzed keto-rearrangement and ring contraction of the tetraketide portion of preaustinoid A3 by ausJ lead to the formation of preaustinoid A4. The aldo-keto reductase ausK, with the help of ausH, is involved in the next step by transforming preaustinoid A4 into isoaustinone which is in turn hydroxylated by the P450 monooxygenase ausI to form austinolide. The cytochrome P450 monooxygenase ausG modifies austinolide to austinol. Austinol is further acetylated to austin by the O-acetyltransferase ausP, which spontaneously changes to dehydroaustin. The cytochrome P450 monooxygenase ausR then converts dehydroaustin is into 7-dehydrodehydroaustin. The hydroxylation catalyzed by ausR permits the O-acetyltransferase ausQ to add an additional acetyl group to the molecule, leading to the formation of acetoxydehydroaustin. The short chain dehydrogenase ausT catalyzes the reduction of the double bond present between carbon atoms 1 and 2 to convert 7-dehydrodehydroaustin into 1,2-dihydro-7-hydroxydehydroaustin. AusQ catalyzes not only an acetylation reaction but also the addition of the PKS ausV diketide product to 1,2-dihydro-7-hydroxydehydroaustin, forming precalidodehydroaustin. Finally, the iron/alpha-ketoglutarate-dependent dioxygenase converts precalidodehydroaustin into calidodehydroaustin. In Aspergillus calidoustus, this protein is Iron/alpha-ketoglutarate-dependent dioxygenase ausU.